We begin with the raw amino-acid sequence, 916 residues long: RNA-directed DNA polymerase from mobile element jockey (916 aa).

The Reverse transcriptase domain maps to 483–757; the sequence is SILRVGYFPK…HEYKYLGVIL (275 aa). A disordered region spans residues 890-916; the sequence is RSASPRSRVRRRLKRHHPQDLLDRALT. Residues 896–906 show a composition bias toward basic residues; it reads SRVRRRLKRHH. Residues 907–916 show a composition bias toward basic and acidic residues; sequence PQDLLDRALT.

It depends on Mg(2+) as a cofactor. Requires Mn(2+) as cofactor.

The catalysed reaction is DNA(n) + a 2'-deoxyribonucleoside 5'-triphosphate = DNA(n+1) + diphosphate. With respect to regulation, inactivated by sulphydryl reagent. The protein is RNA-directed DNA polymerase from mobile element jockey (jockey\pol) of Drosophila funebris (Fruit fly).